A 431-amino-acid polypeptide reads, in one-letter code: Beta-lactamase hydrolase-like protein (431 aa).

Zn(2+) contacts are provided by His212, His214, and His286. Asp309 provides a ligand contact to substrate.

This sequence belongs to the metallo-beta-lactamase superfamily. It depends on Zn(2+) as a cofactor.

In terms of biological role, could play a role in cell adherence or biofilm development. This Xylella fastidiosa (strain Temecula1 / ATCC 700964) protein is Beta-lactamase hydrolase-like protein.